The chain runs to 400 residues: Octopine dehydrogenase (400 aa).

Residues 10-13 (GGNG) and 35-38 (FADE) contribute to the NADH site. Pyruvate-binding residues include Gln-118 and Thr-143. A substrate-binding site is contributed by Gln-118. NAD(+) is bound at residue Cys-148. Met-206 is an L-arginine binding site. Residue His-212 coordinates pyruvate. His-212 is an active-site residue. Arg-324 serves as a coordination point for NAD(+).

This sequence belongs to the lysopine/nopaline/octopine/opine/vitopine dehydrogenases family.

The catalysed reaction is D-octopine + NAD(+) + H2O = L-arginine + pyruvate + NADH + H(+). In terms of biological role, catalyzes the reverse reaction of octopine dehydrogenation. Acts on L-arginine in preference to other substrates. In Mizuhopecten yessoensis (Japanese scallop), this protein is Octopine dehydrogenase.